The sequence spans 228 residues: Indole-3-glycerol phosphate synthase (228 aa).

The protein belongs to the TrpC family.

It catalyses the reaction 1-(2-carboxyphenylamino)-1-deoxy-D-ribulose 5-phosphate + H(+) = (1S,2R)-1-C-(indol-3-yl)glycerol 3-phosphate + CO2 + H2O. Its pathway is amino-acid biosynthesis; L-tryptophan biosynthesis; L-tryptophan from chorismate: step 4/5. In Pyrococcus furiosus (strain ATCC 43587 / DSM 3638 / JCM 8422 / Vc1), this protein is Indole-3-glycerol phosphate synthase.